A 355-amino-acid polypeptide reads, in one-letter code: Mitogen-activated protein kinase (355 aa).

In terms of domain architecture, Protein kinase spans 23-311 (YDIQDVVGEG…VEEALKHPYL (289 aa)). ATP is bound by residues 29-37 (VGEGAYGVV) and Lys52. The active-site Proton acceptor is Asp147. Thr183 is modified (phosphothreonine). The TXY signature appears at 183 to 185 (TEY). Tyr185 bears the Phosphotyrosine mark.

The protein belongs to the protein kinase superfamily. CMGC Ser/Thr protein kinase family. MAP kinase subfamily. Dually phosphorylated on Thr-183 and Tyr-185, which activates the enzyme.

The protein localises to the nucleus. The catalysed reaction is L-seryl-[protein] + ATP = O-phospho-L-seryl-[protein] + ADP + H(+). It carries out the reaction L-threonyl-[protein] + ATP = O-phospho-L-threonyl-[protein] + ADP + H(+). Activated by tyrosine and threonine phosphorylation. Responds to activation by environmental stress by phosphorylating downstream targets. The protein is Mitogen-activated protein kinase (MAPK) of Fusarium vanettenii (Neocosmospora pisi).